The sequence spans 1475 residues: MPPPPLSLPLHGPAGAASVTFAGDEDVKKRVGKKLQKKRHEPTTPAVELPERLKEGDDAGEEDLVPTQGPPMFMNMNQSIFGLIAAAGSRVDFHDRFESSDDESADEGPQRDSADRSHSSSTHGLFLHRKQRRRDESDVAKTTVLNKDPYGSGKPEKHKRKISGHKLLRSLPALPRLPRHKSKKESSKLEPPSEEASDGSGFAQSQPVDEAEDDEDDKDHRLAPVMSRMLEAKAEMSARPSFDVERFSSDQLTYSESADSNDTALARRLQDIFEFDQPEAVIEEYPCWLLQSVLLQGYMYITAKHICFYSYLPKKALEVVKSGYLSKSGKRNPKYNRYWFRLKGDVLSYFKDPSNVYFPSGQIDLRYGISASVTDKKDGLNFTVVTHHRTYHFRADSAPSAKEWVKSLQRVIFRSHNEGDSVKISLPIENVIDIEDTQMLNFADTCKIRVIDNDETYAIDEYFFSFFSFGKEAISVLKILIEDASSTAKDAARLKAVQEEEDRQQQQQQQHPMQPPMQASARSSMSGSRRAIAPPKLTTNKLPEAVKATLSPMSAHSPSALSPRASMDAARASFDAFRSFRRRSLDLSTIIRDSSPRRSFSGNRRSMSRNRLDDQRRGPHQQGSTDSYVQSSMEEPSFSGMVASSIEDPSASQILRGSDVFQNPTMRRSGSASRTEVEKQQRRDPRSPPTLATYSGQHAATAGSLNDGDKQPVTPTLQSITKMGAFPLQRVGAFAEYLNNTSSKLGSMLATESMGYVEKVSGMWRGGRKHYDAPPEIKTDDEDLYEDAEGKIQTSMDRFRAHFALPETEKLQATYFGHILRVLPLYGKIYISDKSFCFRSLLPGTRTKLILPLKDIENVDKEKGFRFGYSGLVVVIRGHEEIFFEFGQAEVRDDCAVTLLQSLETTRYLEKIGDLDTEEREDEENAMAERDALKEARQTEEFHDHDVHLPKETSGVSDAPTILFDDPKASFLNFKPPQPLKITCLTIGSRGDVQPYIALCKGLLAEGHKPRIATHGEFKDWIEGHGIEFAKVEGDPGELMRLCIENGTFTWAFLREANSMFRGWLDELLVSAWEACKGSDLLIESPSAMAGIHIAEKLSIPYFRAFTMPWTRTRAYPHAFIMPEYKMGGAYNYMTYVMFDNVFWKATAHQVNRWRNNTLKLPNTSLEKMQPNKVPFLYNFSEYVVAPPLDFSDWIRVTGYWFLDEGSDWVPPQELTDFIAKARADEKKLVYVGFGSIIVNDTAKMTQEVIDAVLKADVRCILSKGWSDRMGKQGEEAVDQPVMPPEIHVIKSAPHDWLFSQIDAAAHHGGSGTTGASLRAGIPTIIRPFFGDQFFFGSRVEDIGVGICLKKWGAISFARALWEATHNDRMIVKARVLGEQIRSENGVDSAIQCIYRDMEYAKSLIKRKAGKNIQVEPDEDEESAEESWTFIGNDEPDPDMTTKKLSEMPTLPGSSDTKPLGTRIMRVSPSQQSVA.

2 disordered regions span residues 1 to 73 (MPPP…PPMF) and 94 to 218 (HDRF…EDDK). Residues 8 to 17 (LPLHGPAGAA) show a composition bias toward low complexity. Basic residues predominate over residues 30–40 (RVGKKLQKKRH). Basic and acidic residues predominate over residues 108-118 (GPQRDSADRSH). Over residues 156 to 168 (EKHKRKISGHKLL) the composition is skewed to basic residues. Residues 270–315 (QDIFEFDQPEAVIEEYPCWLLQSVLLQGYMYITAKHICFYSYLPKK) form the GRAM 1 domain. Positions 318–413 (EVVKSGYLSK…WVKSLQRVIF (96 aa)) constitute a PH domain. Disordered stretches follow at residues 492–541 (ARLK…TTNK), 594–636 (SSPR…MEEP), and 653–715 (QILR…PVTP). The segment covering 505-531 (QQQQQQHPMQPPMQASARSSMSGSRRA) has biased composition (low complexity). 2 stretches are compositionally biased toward polar residues: residues 621–634 (QQGSTDSYVQSSME) and 653–674 (QILRGSDVFQNPTMRRSGSASR). Over residues 675 to 686 (TEVEKQQRRDPR) the composition is skewed to basic and acidic residues. The 104-residue stretch at 798–901 (RFRAHFALPE…RDDCAVTLLQ (104 aa)) folds into the GRAM 2 domain. UDP-alpha-D-glucose is bound by residues Ser989, Arg990, Asp992, Ala1293, His1295, His1308, Ser1311, Gly1312, Thr1313, Asp1332, and Gln1333. The tract at residues 1413–1475 (IQVEPDEDEE…RVSPSQQSVA (63 aa)) is disordered. A compositionally biased stretch (acidic residues) spans 1416 to 1425 (EPDEDEESAE).

It belongs to the glycosyltransferase 28 family.

It localises to the cytoplasm. Its subcellular location is the preautophagosomal structure membrane. It carries out the reaction a sterol + UDP-alpha-D-glucose = a sterol 3-beta-D-glucoside + UDP + H(+). It catalyses the reaction ergosterol + UDP-alpha-D-glucose = ergosteryl 3-beta-D-glucoside + UDP + H(+). In terms of biological role, sterol glycosyltransferase responsible for the glycosylation of ergosterol to form ergosterol-glucoside. Mediates autophagic degradation of peroxisomes (pexophagy) and is involved in pathogenesis via peroxisome degradation inside appressoria that are developing into the host invasion stage. This is Sterol 3-beta-glucosyltransferase from Glomerella lagenarium (Anthracnose fungus).